A 138-amino-acid polypeptide reads, in one-letter code: Protein FAM216B (138 aa).

The protein belongs to the FAM216 family.

The protein is Protein FAM216B (Fam216b) of Mus musculus (Mouse).